Here is a 393-residue protein sequence, read N- to C-terminus: Dual specificity mitogen-activated protein kinase kinase 1 (393 aa).

Residues 1–27 (MPKKKPTPIQLNPAPDGSAVNGTSSAE) form a disordered region. Positions 68–361 (FEKISELGAG…LKQLMVHAFI (294 aa)) constitute a Protein kinase domain. ATP is bound by residues 74 to 82 (LGAGNGGVV) and lysine 97. The Proton acceptor role is filled by aspartate 190. Serine 218 and serine 222 each carry phosphoserine; by RAF. Residues 270–307 (ELELLFGCHVEGDAAETPPRPRTPGRPLSSYGMDSRPP) are RAF1-binding. Position 286 is a phosphothreonine (threonine 286). Threonine 292 carries the phosphothreonine; by MAPK1 modification. A Phosphoserine; by PAK modification is found at serine 298.

This sequence belongs to the protein kinase superfamily. STE Ser/Thr protein kinase family. MAP kinase kinase subfamily. Found in a complex with at least BRAF, HRAS, MAP2K1, MAPK3/ERK1 and RGS14. Forms a heterodimer with MAP2K2/MEK2. Forms heterodimers with KSR2 which further dimerize to form tetramers. Interacts with KSR1 or KSR2 and BRAF; the interaction with KSR1 or KSR2 mediates KSR1-BRAF or KSR2-BRAF dimerization. Interacts with ARBB2, LAMTOR3, MAPK1/ERK2 and RAF1. Interacts with MAPK1/ERK2. Interacts with MORG1. Interacts with PPARG. Interacts with SGK1. Interacts with BIRC6/bruce. Interacts with KAT7; the interaction promotes KAT7 phosphorylation. Interacts with RAF1 and NEK10; the interaction is required for ERK1/2-signaling pathway activation in response to UV irradiation. Interacts with TRAF3IP3. Interacts with MOS. Post-translationally, phosphorylation at Ser-218 and Ser-222 by MAP kinase kinase kinases (BRAF or MEKK1) positively regulates kinase activity. Also phosphorylated at Thr-292 by MAPK1/ERK2 and at Ser-298 by PAK. MAPK1/ERK2 phosphorylation of Thr-292 occurs in response to cellular adhesion and leads to inhibition of Ser-298 phosphorylation by PAK. Autophosphorylated at Ser-218 and Ser-222, autophosphosphorylation is promoted by NEK10 following UV irradiation.

It localises to the cytoplasm. Its subcellular location is the cytoskeleton. The protein resides in the microtubule organizing center. The protein localises to the centrosome. It is found in the spindle pole body. It localises to the nucleus. Its subcellular location is the membrane. It catalyses the reaction L-seryl-[protein] + ATP = O-phospho-L-seryl-[protein] + ADP + H(+). The enzyme catalyses L-threonyl-[protein] + ATP = O-phospho-L-threonyl-[protein] + ADP + H(+). It carries out the reaction L-tyrosyl-[protein] + ATP = O-phospho-L-tyrosyl-[protein] + ADP + H(+). Ras proteins such as HRAS mediate the activation of RAF proteins such as RAF1 or BRAF which in turn activate extracellular signal-regulated kinases (ERK) through MAPK (mitogen-activated protein kinases) and ERK kinases MAP2K1/MEK1 and MAP2K2/MEK2. Activation occurs through phosphorylation of Ser-218 and Ser-222. MAP2K1/MEK1 binds KSR1 or KSR2 releasing the inhibitory intramolecular interaction between KSR1 or KSR2 protein kinase and N-terminal domains. This allows KSR1 or KSR2 dimerization with BRAF leading to BRAF activation and phosphorylation of MAP2K1. MAP2K1/MEK1 is also the target of negative feed-back regulation by its substrate kinases, such as MAPK1/ERK2. These phosphorylate MAP2K1/MEK1 on Thr-292, thereby facilitating dephosphorylation of the activating residues Ser-218 and Ser-222. Inhibited by serine/threonine phosphatase 2A. Its function is as follows. Dual specificity protein kinase which acts as an essential component of the MAP kinase signal transduction pathway. Binding of extracellular ligands such as growth factors, cytokines and hormones to their cell-surface receptors activates RAS and this initiates RAF1 activation. RAF1 then further activates the dual-specificity protein kinases MAP2K1/MEK1 and MAP2K2/MEK2. Both MAP2K1/MEK1 and MAP2K2/MEK2 function specifically in the MAPK/ERK cascade, and catalyze the concomitant phosphorylation of a threonine and a tyrosine residue in a Thr-Glu-Tyr sequence located in the extracellular signal-regulated kinases MAPK3/ERK1 and MAPK1/ERK2, leading to their activation and further transduction of the signal within the MAPK/ERK cascade. Activates BRAF in a KSR1 or KSR2-dependent manner; by binding to KSR1 or KSR2 releases the inhibitory intramolecular interaction between KSR1 or KSR2 protein kinase and N-terminal domains which promotes KSR1 or KSR2-BRAF dimerization and BRAF activation. Depending on the cellular context, this pathway mediates diverse biological functions such as cell growth, adhesion, survival and differentiation, predominantly through the regulation of transcription, metabolism and cytoskeletal rearrangements. One target of the MAPK/ERK cascade is peroxisome proliferator-activated receptor gamma (PPARG), a nuclear receptor that promotes differentiation and apoptosis. MAP2K1/MEK1 has been shown to export PPARG from the nucleus. The MAPK/ERK cascade is also involved in the regulation of endosomal dynamics, including lysosome processing and endosome cycling through the perinuclear recycling compartment (PNRC), as well as in the fragmentation of the Golgi apparatus during mitosis. The sequence is that of Dual specificity mitogen-activated protein kinase kinase 1 (Map2k1) from Mus musculus (Mouse).